Here is a 512-residue protein sequence, read N- to C-terminus: Activin receptor type-2B (512 aa).

An N-terminal signal peptide occupies residues 1–18; the sequence is MTAPWVALALLWGSLCAG. Over 19 to 137 the chain is Extracellular; that stretch reads SGRGEAETRE…PPPTAPTLLT (119 aa). Cystine bridges form between C29–C59, C49–C77, C84–C103, C90–C102, and C104–C109. N-linked (GlcNAc...) asparagine glycosylation is found at N42 and N65. The chain crosses the membrane as a helical span at residues 138–158; the sequence is VLAYSLLPIGGLSLIVLLAFW. Over 159-512 the chain is Cytoplasmic; it reads MYRHRKPPYG…VDLPPKESSI (354 aa). One can recognise a Protein kinase domain in the interval 190–480; it reads LQLLEIKARG…AGCVEERVSL (291 aa). ATP is bound by residues 196-204 and K217; that span reads KARGRFGCV. D321 (proton acceptor) is an active-site residue. The interval 491-512 is interaction with DYNLT1; sequence DCLVSLVTSVTNVDLPPKESSI.

It belongs to the protein kinase superfamily. TKL Ser/Thr protein kinase family. TGFB receptor subfamily. In terms of assembly, forms an activin receptor complex with activin type II receptors such as ACVR1B. Interacts with VPS39. Interacts with DYNLT1. Interacts with BMP3. Interacts with BMP2. Interacts with BMP6. Mg(2+) is required as a cofactor. Mn(2+) serves as cofactor. Phosphorylated. Constitutive phosphorylation is in part catalyzed by its own kinase activity.

It is found in the cell membrane. It catalyses the reaction L-threonyl-[receptor-protein] + ATP = O-phospho-L-threonyl-[receptor-protein] + ADP + H(+). It carries out the reaction L-seryl-[receptor-protein] + ATP = O-phospho-L-seryl-[receptor-protein] + ADP + H(+). Transmembrane serine/threonine kinase activin type-2 receptor forming an activin receptor complex with activin type-1 serine/threonine kinase receptors (ACVR1, ACVR1B or ACVR1c). Transduces the activin signal from the cell surface to the cytoplasm and is thus regulating many physiological and pathological processes including neuronal differentiation and neuronal survival, hair follicle development and cycling, FSH production by the pituitary gland, wound healing, extracellular matrix production, immunosuppression and carcinogenesis. Activin is also thought to have a paracrine or autocrine role in follicular development in the ovary. Within the receptor complex, the type-2 receptors act as a primary activin receptors (binds activin-A/INHBA, activin-B/INHBB as well as inhibin-A/INHA-INHBA). The type-1 receptors like ACVR1B act as downstream transducers of activin signals. Activin binds to type-2 receptor at the plasma membrane and activates its serine-threonine kinase. The activated receptor type-2 then phosphorylates and activates the type-1 receptor. Once activated, the type-1 receptor binds and phosphorylates the SMAD proteins SMAD2 and SMAD3, on serine residues of the C-terminal tail. Soon after their association with the activin receptor and subsequent phosphorylation, SMAD2 and SMAD3 are released into the cytoplasm where they interact with the common partner SMAD4. This SMAD complex translocates into the nucleus where it mediates activin-induced transcription. Inhibitory SMAD7, which is recruited to ACVR1B through FKBP1A, can prevent the association of SMAD2 and SMAD3 with the activin receptor complex, thereby blocking the activin signal. Activin signal transduction is also antagonized by the binding to the receptor of inhibin-B via the IGSF1 inhibin coreceptor. This chain is Activin receptor type-2B (ACVR2B), found in Homo sapiens (Human).